The chain runs to 483 residues: Glycogen synthase (483 aa).

Lys15 provides a ligand contact to ADP-alpha-D-glucose.

It belongs to the glycosyltransferase 1 family. Bacterial/plant glycogen synthase subfamily.

The catalysed reaction is [(1-&gt;4)-alpha-D-glucosyl](n) + ADP-alpha-D-glucose = [(1-&gt;4)-alpha-D-glucosyl](n+1) + ADP + H(+). Its pathway is glycan biosynthesis; glycogen biosynthesis. Synthesizes alpha-1,4-glucan chains using ADP-glucose. In Petrotoga mobilis (strain DSM 10674 / SJ95), this protein is Glycogen synthase.